Consider the following 277-residue polypeptide: UBX domain-containing protein 10 (277 aa).

The segment at 1-102 is disordered; sequence MAIEAPVNFA…APDEMPELLL (102 aa). A compositionally biased stretch (polar residues) spans 16-31; it reads TVVSTAGDSSTWQPSS. Residues 35–50 show a composition bias toward basic residues; that stretch reads HVIRPKSAKGRKRPNL. A compositionally biased stretch (low complexity) spans 60 to 77; the sequence is SPSALSSSPPPRSSGSPS. Residue Ser88 is modified to Phosphoserine. The region spanning 191–268 is the UBX domain; sequence DEEPRLLLAV…GILHKSVLGI (78 aa).

Belongs to the UBXN10 family. Interacts with CLUAP1; the interaction is direct and mediates interaction with the intraflagellar transport complex B (IFT-B). Interacts with VCP; the interaction is direct.

It is found in the cell projection. The protein localises to the cilium. Its function is as follows. VCP/p97-binding protein required for ciliogenesis. Acts as a tethering factor that facilitates recruitment of VCP/p97 to the intraflagellar transport complex B (IFT-B) in cilia. UBX domain-containing proteins act as tethering factors for VCP/p97 and may specify substrate specificity of VCP/p97. This chain is UBX domain-containing protein 10, found in Mus musculus (Mouse).